The primary structure comprises 149 residues: Sec-independent protein translocase protein TatB (149 aa).

Residues 1 to 21 traverse the membrane as a helical segment; it reads MFDIGFTELIVIGIVALVVVG. The disordered stretch occupies residues 92–149; it reads VDMLDKSVRNEPQNAQTPPQTADAEPAQPDVRQQTLPLEEPDQNRAAGEPSSTSTRPA. Positions 101-111 are enriched in polar residues; sequence NEPQNAQTPPQ.

Belongs to the TatB family. The Tat system comprises two distinct complexes: a TatABC complex, containing multiple copies of TatA, TatB and TatC subunits, and a separate TatA complex, containing only TatA subunits. Substrates initially bind to the TatABC complex, which probably triggers association of the separate TatA complex to form the active translocon.

The protein resides in the cell inner membrane. Its function is as follows. Part of the twin-arginine translocation (Tat) system that transports large folded proteins containing a characteristic twin-arginine motif in their signal peptide across membranes. Together with TatC, TatB is part of a receptor directly interacting with Tat signal peptides. TatB may form an oligomeric binding site that transiently accommodates folded Tat precursor proteins before their translocation. This is Sec-independent protein translocase protein TatB from Thiobacillus denitrificans (strain ATCC 25259 / T1).